Consider the following 188-residue polypeptide: Elongation factor P (188 aa).

This sequence belongs to the elongation factor P family.

The protein localises to the cytoplasm. Its pathway is protein biosynthesis; polypeptide chain elongation. Its function is as follows. Involved in peptide bond synthesis. Stimulates efficient translation and peptide-bond synthesis on native or reconstituted 70S ribosomes in vitro. Probably functions indirectly by altering the affinity of the ribosome for aminoacyl-tRNA, thus increasing their reactivity as acceptors for peptidyl transferase. In Methylorubrum extorquens (strain CM4 / NCIMB 13688) (Methylobacterium extorquens), this protein is Elongation factor P.